The following is a 495-amino-acid chain: Protein nucleotidyltransferase YdiU (495 aa).

ATP is bound by residues Gly92, Gly94, Arg95, Lys114, Asp126, Gly127, Arg177, and Arg184. Asp261 serves as the catalytic Proton acceptor. Residues Asn262 and Asp271 each coordinate Mg(2+). Position 271 (Asp271) interacts with ATP.

This sequence belongs to the SELO family. Mg(2+) is required as a cofactor. Mn(2+) serves as cofactor.

It carries out the reaction L-seryl-[protein] + ATP = 3-O-(5'-adenylyl)-L-seryl-[protein] + diphosphate. It catalyses the reaction L-threonyl-[protein] + ATP = 3-O-(5'-adenylyl)-L-threonyl-[protein] + diphosphate. The catalysed reaction is L-tyrosyl-[protein] + ATP = O-(5'-adenylyl)-L-tyrosyl-[protein] + diphosphate. The enzyme catalyses L-histidyl-[protein] + UTP = N(tele)-(5'-uridylyl)-L-histidyl-[protein] + diphosphate. It carries out the reaction L-seryl-[protein] + UTP = O-(5'-uridylyl)-L-seryl-[protein] + diphosphate. It catalyses the reaction L-tyrosyl-[protein] + UTP = O-(5'-uridylyl)-L-tyrosyl-[protein] + diphosphate. Its function is as follows. Nucleotidyltransferase involved in the post-translational modification of proteins. It can catalyze the addition of adenosine monophosphate (AMP) or uridine monophosphate (UMP) to a protein, resulting in modifications known as AMPylation and UMPylation. The protein is Protein nucleotidyltransferase YdiU of Bordetella bronchiseptica (strain ATCC BAA-588 / NCTC 13252 / RB50) (Alcaligenes bronchisepticus).